A 446-amino-acid polypeptide reads, in one-letter code: Deoxyguanosinetriphosphate triphosphohydrolase-like protein (446 aa).

Positions 1–28 are disordered; it reads MSSSVWQERRHGEDKQRRNDHRSPFQRD. Basic and acidic residues predominate over residues 7 to 28; that stretch reads QERRHGEDKQRRNDHRSPFQRD. The region spanning 59–252 is the HD domain; the sequence is RLTHSLEVSQ…MELADDIAYA (194 aa).

Belongs to the dGTPase family. Type 2 subfamily.

The polypeptide is Deoxyguanosinetriphosphate triphosphohydrolase-like protein (Shewanella sp. (strain MR-4)).